Here is a 548-residue protein sequence, read N- to C-terminus: ATP synthase subunit alpha (548 aa).

172 to 179 (GDRKTGKT) lines the ATP pocket. Residues 510 to 548 (QFTTSSGESAAPSEPEAEALAADEVGQETVKVNRPAPKK) form a disordered region. The segment covering 514-531 (SSGESAAPSEPEAEALAA) has biased composition (low complexity).

The protein belongs to the ATPase alpha/beta chains family. F-type ATPases have 2 components, CF(1) - the catalytic core - and CF(0) - the membrane proton channel. CF(1) has five subunits: alpha(3), beta(3), gamma(1), delta(1), epsilon(1). CF(0) has three main subunits: a(1), b(2) and c(9-12). The alpha and beta chains form an alternating ring which encloses part of the gamma chain. CF(1) is attached to CF(0) by a central stalk formed by the gamma and epsilon chains, while a peripheral stalk is formed by the delta and b chains.

The protein resides in the cell membrane. It catalyses the reaction ATP + H2O + 4 H(+)(in) = ADP + phosphate + 5 H(+)(out). In terms of biological role, produces ATP from ADP in the presence of a proton gradient across the membrane. The alpha chain is a regulatory subunit. The sequence is that of ATP synthase subunit alpha from Saccharopolyspora erythraea (strain ATCC 11635 / DSM 40517 / JCM 4748 / NBRC 13426 / NCIMB 8594 / NRRL 2338).